Here is an 88-residue protein sequence, read N- to C-terminus: uncharacterized protein (88 aa).

The disordered stretch occupies residues 1–54 (AVDAYDDDDNLKNEEGDYYNESDDGYSGDEEEEEKQEEDEQDDDDLQFDDGVPE). Acidic residues predominate over residues 16 to 53 (GDYYNESDDGYSGDEEEEEKQEEDEQDDDDLQFDDGVP).

As to expression, predominantly in developing fruit.

This is an uncharacterized protein from Fragaria ananassa (Strawberry).